A 212-amino-acid polypeptide reads, in one-letter code: NAD(P)H-hydrate epimerase (212 aa).

Residues 11–212 (MRHYDFYTIN…ANDMGTYAVD (202 aa)) enclose the YjeF N-terminal domain. A (6S)-NADPHX-binding site is contributed by 60–64 (NNGGD). 2 residues coordinate K(+): Asn61 and Asp123. (6S)-NADPHX contacts are provided by residues 127–133 (GIGIDRA), Tyr138, and Asp156. Position 159 (Ser159) interacts with K(+).

It belongs to the NnrE/AIBP family. K(+) serves as cofactor.

It catalyses the reaction (6R)-NADHX = (6S)-NADHX. It carries out the reaction (6R)-NADPHX = (6S)-NADPHX. Functionally, catalyzes the epimerization of the S- and R-forms of NAD(P)HX, a damaged form of NAD(P)H that is a result of enzymatic or heat-dependent hydration. This is a prerequisite for the S-specific NAD(P)H-hydrate dehydratase to allow the repair of both epimers of NAD(P)HX. The polypeptide is NAD(P)H-hydrate epimerase (Limosilactobacillus reuteri (strain DSM 20016) (Lactobacillus reuteri)).